The sequence spans 507 residues: 2,3-bisphosphoglycerate-independent phosphoglycerate mutase (507 aa).

Mn(2+) is bound by residues Asp11 and Ser61. Ser61 (phosphoserine intermediate) is an active-site residue. Residues His122, 150-151 (RD), Arg182, Arg188, 257-260 (RPDR), and Lys332 each bind substrate. Residues Asp397, His401, Asp438, His439, and His456 each coordinate Mn(2+).

This sequence belongs to the BPG-independent phosphoglycerate mutase family. In terms of assembly, monomer. It depends on Mn(2+) as a cofactor.

It catalyses the reaction (2R)-2-phosphoglycerate = (2R)-3-phosphoglycerate. Its pathway is carbohydrate degradation; glycolysis; pyruvate from D-glyceraldehyde 3-phosphate: step 3/5. Catalyzes the interconversion of 2-phosphoglycerate and 3-phosphoglycerate. In Mycoplasma genitalium (strain ATCC 33530 / DSM 19775 / NCTC 10195 / G37) (Mycoplasmoides genitalium), this protein is 2,3-bisphosphoglycerate-independent phosphoglycerate mutase.